The following is a 399-amino-acid chain: Insertion element IS900 uncharacterized 42 kDa protein (399 aa).

This sequence belongs to the transposase IS1111A/IS1328/IS1533 family.

The polypeptide is Insertion element IS900 uncharacterized 42 kDa protein (Mycobacterium paratuberculosis).